Here is a 58-residue protein sequence, read N- to C-terminus: Sodium/potassium-transporting ATPase subunit gamma (58 aa).

Residues 20–39 (NGGLIFAALAFIVGLVIILS) form a helical membrane-spanning segment.

Belongs to the FXYD family. Regulatory subunit of the sodium/potassium-transporting ATPase which is composed of a catalytic alpha subunit, an auxiliary non-catalytic beta subunit and an additional regulatory subunit. As to expression, highest levels expressed in the kidney and spleen. Restricted to the basolateral membrane in renal epithelial cells and varies in its level of expression along the nephron.

It is found in the membrane. May be involved in forming the receptor site for cardiac glycoside binding or may modulate the transport function of the sodium ATPase. The sequence is that of Sodium/potassium-transporting ATPase subunit gamma (FXYD2) from Bos taurus (Bovine).